The following is a 267-amino-acid chain: Hydroxynaphthalene reductase-like protein Arp2 (267 aa).

Isoleucine 25, asparagine 45, aspartate 71, and asparagine 98 together coordinate NADP(+). Residues serine 147 and serine 148 each act as proton donor in the active site. Positions 162, 166, 195, and 197 each coordinate NADP(+). Residue tyrosine 162 is the Proton acceptor of the active site. The active-site Lowers pKa of active site Tyr is the lysine 166.

The protein belongs to the short-chain dehydrogenases/reductases (SDR) family.

Its function is as follows. Hydroxynaphthalene reductase-like protein; part of the Pks2 gene cluster that mediates the formation of infectious structures (appressoria), enabling these fungi to kill insects faster. The product of the Pks2 gene cluster is different from the one of Pks1 and has still not been identified. The protein is Hydroxynaphthalene reductase-like protein Arp2 of Metarhizium anisopliae (strain ARSEF 549).